Consider the following 74-residue polypeptide: MKFLEKLTSKKGQIAMELGILVMAAVAVAAIAAYFYATNVSNTGKQITNSTNQTTQALADAISDATSQMSNITD.

Residues 1–12 (MKFLEKLTSKKG) constitute a propeptide that is removed on maturation. Q13 bears the Pyrrolidone carboxylic acid mark. The QXSXEXXXL signature appears at 13 to 21 (QIAMELGIL).

The N-terminus is cleaved by the prepilin peptidase EppA, which recognizes the class III signal sequence. In terms of processing, N-glycosylated. Glycosylated with an N-linked branched pentasaccharide glycan. May contain glycans at three sites. Glycosylation is AglB-dependent. The N-glycosylation does not occur unless the signal peptide has been cleaved first.

It localises to the secreted. It is found in the cell surface. The protein localises to the fimbrium. In terms of biological role, major component of the type IV-like pili. This chain is Major structural pilin EpdE, found in Methanococcus maripaludis (strain DSM 14266 / JCM 13030 / NBRC 101832 / S2 / LL).